The primary structure comprises 140 residues: Large ribosomal subunit protein uL16 (140 aa).

Over residues 1 to 14 the composition is skewed to basic residues; the sequence is MLSPRRTKFRKQQR. Positions 1–22 are disordered; the sequence is MLSPRRTKFRKQQRGRMEGAAT.

This sequence belongs to the universal ribosomal protein uL16 family. As to quaternary structure, part of the 50S ribosomal subunit.

Its function is as follows. Binds 23S rRNA and is also seen to make contacts with the A and possibly P site tRNAs. This Cyanothece sp. (strain PCC 7425 / ATCC 29141) protein is Large ribosomal subunit protein uL16.